The chain runs to 64 residues: Large ribosomal subunit protein bL32 (64 aa).

Belongs to the bacterial ribosomal protein bL32 family.

The polypeptide is Large ribosomal subunit protein bL32 (Flavobacterium johnsoniae (strain ATCC 17061 / DSM 2064 / JCM 8514 / BCRC 14874 / CCUG 350202 / NBRC 14942 / NCIMB 11054 / UW101) (Cytophaga johnsonae)).